Here is a 688-residue protein sequence, read N- to C-terminus: PTS system glucoside-specific EIICBA component (688 aa).

Residues 3–427 enclose the PTS EIIC type-1 domain; that stretch reads KKLFGQLQRI…FKLKTPGRED (425 aa). 10 consecutive transmembrane segments (helical) span residues 12-32, 81-101, 137-157, 182-202, 223-243, 284-304, 315-335, 340-360, 364-384, and 395-415; these read IGKA…LLAF, LGLA…YLIM, LVLG…MGAL, FVPI…SFAW, LTTF…LHHI, AFTT…AFAI, VVGG…ITEP, FLFV…TSFL, LLGV…ILYG, and LVIP…DFAI. One can recognise a PTS EIIB type-1 domain in the interval 438 to 519; it reads AKLPFDVLDA…AKIMSGEITK (82 aa). C460 serves as the catalytic Phosphocysteine intermediate; for EIIB activity. Residues 560-664 form the PTS EIIA type-1 domain; sequence DQVFAGKMMG…SIVTPMIITN (105 aa). Residue H612 is the Tele-phosphohistidine intermediate; for EIIA activity of the active site.

The protein resides in the cell membrane. In terms of biological role, the phosphoenolpyruvate-dependent sugar phosphotransferase system (sugar PTS), a major carbohydrate active -transport system, catalyzes the phosphorylation of incoming sugar substrates concomitantly with their translocation across the cell membrane. This system is involved in alpha- and beta-glucoside transport. The polypeptide is PTS system glucoside-specific EIICBA component (glcB) (Staphylococcus aureus (strain Mu3 / ATCC 700698)).